Reading from the N-terminus, the 2410-residue chain is Dual specificity protein kinase splA (2410 aa).

6 disordered regions span residues 29–48, 66–103, 116–158, 187–252, 508–647, and 659–820; these read NNNN…NNNN, NHPS…GELT, NTQT…SNGG, NISP…SSGI, QQLQ…VPSA, and SSSS…KKEG. Composition is skewed to low complexity over residues 116–128 and 137–158; these read NTQT…TSPN and NTTT…SNGG. Pro residues predominate over residues 514–525; sequence QPPPTIQPPPQQ. Positions 530–544 are enriched in low complexity; it reads LRGNRSSGNLSGLNS. Polar residues predominate over residues 545–554; it reads FSLKQSTDSL. Low complexity predominate over residues 560-583; it reads SQQSTVSSNSTPIAATPISPLTAP. Positions 584-594 are enriched in pro residues; that stretch reads TSPPPPPPPPT. 6 stretches are compositionally biased toward low complexity: residues 595-618, 627-639, 659-686, 701-738, 746-759, and 777-813; these read NFNS…NTTV, VLPK…SPRP, SSSS…LNIS, SPSY…SPSV, ISPN…PNIS, and NTNN…NNTN. B30.2/SPRY domains follow at residues 822–1004 and 1020–1209; these read SSWF…GPFS and DSGG…PPFK. Disordered stretches follow at residues 1228 to 1428 and 1493 to 1512; these read PNGN…NNIY and SLGV…PRKI. Low complexity-rich tracts occupy residues 1229–1359, 1373–1399, 1419–1428, and 1493–1507; these read NGNN…NNNI, SSTG…NNSS, SSTNNNNNIY, and SLGV…SPKT. The 223-residue stretch at 1481 to 1703 folds into the B30.2/SPRY 3 domain; that stretch reads PITASTNHTL…CVATFPGGHF (223 aa). The SAM domain occupies 1734–1798; it reads WAPNDVAIWL…INRLNRMIQI (65 aa). The interval 1862–2105 is disordered; it reads KSYTQKEIED…PPPPPQLPVR (244 aa). Residues 1865 to 1874 show a composition bias toward basic and acidic residues; it reads TQKEIEDRNR. Residues 1951–1967 are compositionally biased toward low complexity; sequence SVSSTGGSSGFLTFPSS. Over residues 1989–2002 the composition is skewed to polar residues; it reads ITSNYKGITNTGQP. The span at 2020-2070 shows a compositional bias: low complexity; it reads SNNGNNGNNNNNNNNNNIKANQQQQQQSSYQQSQTQQQQQHITSTSTSTTN. A compositionally biased stretch (pro residues) spans 2089-2102; it reads PSRPPPPPPPPPQL. The Protein kinase domain occupies 2115 to 2387; sequence LEFGQTIGKG…FKQIIVHLKE (273 aa). ATP contacts are provided by residues 2121–2129 and lysine 2142; that span reads IGKGFFGEV. The Proton acceptor role is filled by aspartate 2243.

It belongs to the protein kinase superfamily. TKL Tyr protein kinase family. Tyrosine kinase domain is capable of autophosphorylation, in vitro; however it is also autophosphorylated on serine and threonine residues.

It carries out the reaction L-tyrosyl-[protein] + ATP = O-phospho-L-tyrosyl-[protein] + ADP + H(+). Functionally, essential for spore differentiation. This is Dual specificity protein kinase splA (splA) from Dictyostelium discoideum (Social amoeba).